A 343-amino-acid polypeptide reads, in one-letter code: Succinylglutamate desuccinylase (343 aa).

Zn(2+) is bound by residues His-60, Glu-63, and His-157. Glu-221 is a catalytic residue.

It belongs to the AspA/AstE family. Succinylglutamate desuccinylase subfamily. Zn(2+) is required as a cofactor.

The catalysed reaction is N-succinyl-L-glutamate + H2O = L-glutamate + succinate. The protein operates within amino-acid degradation; L-arginine degradation via AST pathway; L-glutamate and succinate from L-arginine: step 5/5. Its function is as follows. Transforms N(2)-succinylglutamate into succinate and glutamate. This chain is Succinylglutamate desuccinylase, found in Idiomarina loihiensis (strain ATCC BAA-735 / DSM 15497 / L2-TR).